A 297-amino-acid polypeptide reads, in one-letter code: Homoserine kinase (297 aa).

Residue 82-92 (PLTRGLGSSAS) coordinates ATP.

Belongs to the GHMP kinase family. Homoserine kinase subfamily.

It is found in the cytoplasm. The enzyme catalyses L-homoserine + ATP = O-phospho-L-homoserine + ADP + H(+). Its pathway is amino-acid biosynthesis; L-threonine biosynthesis; L-threonine from L-aspartate: step 4/5. In terms of biological role, catalyzes the ATP-dependent phosphorylation of L-homoserine to L-homoserine phosphate. The polypeptide is Homoserine kinase (Bacillus mycoides (strain KBAB4) (Bacillus weihenstephanensis)).